The following is a 221-amino-acid chain: Casparian strip membrane protein 3 (221 aa).

Residues 1 to 12 show a composition bias toward basic and acidic residues; that stretch reads MDIEKAGSRREE. Positions 1 to 27 are disordered; that stretch reads MDIEKAGSRREEEEPIVQRPKLDKGKG. The Cytoplasmic portion of the chain corresponds to 1 to 58; the sequence is MDIEKAGSRREEEEPIVQRPKLDKGKGKAHVFAPPMNYNRIMDKHKQEKMSPAGWKRG. Residues 59–79 traverse the membrane as a helical segment; the sequence is VAIFDFVLRLIAAITAMAAAA. The Extracellular portion of the chain corresponds to 80-109; that stretch reads KMATTEETLPFFTQFLQFQADYTDLPTMSS. The helical transmembrane segment at 110-130 threads the bilayer; the sequence is FVIVNSIVGGYLTLSLPFSIV. Topologically, residues 131–148 are cytoplasmic; that stretch reads CILRPLAVPPRLFLILCD. The chain crosses the membrane as a helical span at residues 149–169; that stretch reads TVMMGLTLMAASASAAIVYLA. Topologically, residues 170 to 194 are extracellular; the sequence is HNGNSSSNWLPVCQQFGDFCQGTSG. A glycan (N-linked (GlcNAc...) asparagine) is linked at asparagine 173. Residues 195 to 215 form a helical membrane-spanning segment; sequence AVVASFIAATLLMFLVILSAF. Residues 216–221 lie on the Cytoplasmic side of the membrane; that stretch reads ALKRTT.

Belongs to the Casparian strip membrane proteins (CASP) family. As to quaternary structure, homodimer and heterodimers with other CASP proteins. Interacts with CASP1, CASP2, CASP4 and CASP5.

The protein localises to the cell membrane. In terms of biological role, regulates membrane-cell wall junctions and localized cell wall deposition. Required for establishment of the Casparian strip membrane domain (CSD) and the subsequent formation of Casparian strips, a cell wall modification of the root endodermis that determines an apoplastic barrier between the intraorganismal apoplasm and the extraorganismal apoplasm and prevents lateral diffusion. This chain is Casparian strip membrane protein 3 (CASP3), found in Arabidopsis thaliana (Mouse-ear cress).